A 106-amino-acid polypeptide reads, in one-letter code: CLAVATA3/ESR (CLE)-related protein 21 (106 aa).

A signal peptide spans 1-31; sequence MLILSSRYAMKRDVLIIVIFTVLVLIIISRS. The N-linked (GlcNAc...) asparagine glycan is linked to Asn-47. The span at 72–82 shows a compositional bias: basic residues; the sequence is KVRRRSSRFRR. Positions 72–106 are disordered; sequence KVRRRSSRFRRKTDGDEEEEEKRSIPTGPNPLHNK. A hydroxyproline mark is found at Pro-97 and Pro-100. O-linked (Ara...) hydroxyproline glycosylation occurs at Pro-100.

Belongs to the CLV3/ESR signal peptide family. Post-translationally, the O-glycosylation (arabinosylation) of the hydroxyproline Pro-100 enhances binding affinity of the CLE21p peptide for its receptor. In terms of tissue distribution, mostly expressed in leaves and apex, and, to a lower extent, in seedlings, flowers, stems and siliques.

It is found in the secreted. Its subcellular location is the extracellular space. Its function is as follows. Extracellular signal peptide that regulates cell fate. Represses root apical meristem maintenance. Regulates the transition of protophloem cells from proliferation to differentiation, thus impinging on postembryonic growth capacity of the root meristem; this signaling pathway requires CRN and CLV2. The polypeptide is CLAVATA3/ESR (CLE)-related protein 21 (Arabidopsis thaliana (Mouse-ear cress)).